A 180-amino-acid polypeptide reads, in one-letter code: Capsid assembly scaffolding protein (180 aa).

The protein belongs to the SPP1-like scaffolding protein family. As to quaternary structure, homodimer.

Functionally, scaffolding protein involved in the icosahedric procapsid assembly. Coassembles with the capsid proteins to form the procapsid, in which the scaffolding protein is found within the external shell of icosahedrally arranged capsid protein subunits. In a subsequent step the scaffolding protein molecules are released from the procapsid. The polypeptide is Capsid assembly scaffolding protein (g20) (Lactococcus phage mv4 (Lactococcus delbrueckii bacteriophage mv4)).